The sequence spans 297 residues: Acetylglutamate kinase (297 aa).

Substrate-binding positions include 68-69 (GG), R90, and N195.

This sequence belongs to the acetylglutamate kinase family. ArgB subfamily.

Its subcellular location is the cytoplasm. The enzyme catalyses N-acetyl-L-glutamate + ATP = N-acetyl-L-glutamyl 5-phosphate + ADP. The protein operates within amino-acid biosynthesis; L-arginine biosynthesis; N(2)-acetyl-L-ornithine from L-glutamate: step 2/4. In terms of biological role, catalyzes the ATP-dependent phosphorylation of N-acetyl-L-glutamate. In Chelativorans sp. (strain BNC1), this protein is Acetylglutamate kinase.